The primary structure comprises 137 residues: ATP synthase epsilon chain, sodium ion specific (137 aa).

It belongs to the ATPase epsilon chain family. As to quaternary structure, F-type ATPases have 2 components, CF(1) - the catalytic core - and CF(0) - the membrane proton channel. CF(1) has five subunits: alpha(3), beta(3), gamma(1), delta(1), epsilon(1). CF(0) has three main subunits: a, b and c.

It is found in the cell inner membrane. Produces ATP from ADP in the presence of a sodium gradient across the membrane. The protein is ATP synthase epsilon chain, sodium ion specific (atpC) of Propionigenium modestum.